A 126-amino-acid polypeptide reads, in one-letter code: Aspartate 1-decarboxylase (126 aa).

S25 functions as the Schiff-base intermediate with substrate; via pyruvic acid in the catalytic mechanism. S25 carries the post-translational modification Pyruvic acid (Ser). T57 lines the substrate pocket. Y58 acts as the Proton donor in catalysis. Position 72–74 (72–74 (GAT)) interacts with substrate.

It belongs to the PanD family. As to quaternary structure, heterooctamer of four alpha and four beta subunits. The cofactor is pyruvate. Is synthesized initially as an inactive proenzyme, which is activated by self-cleavage at a specific serine bond to produce a beta-subunit with a hydroxyl group at its C-terminus and an alpha-subunit with a pyruvoyl group at its N-terminus.

The protein resides in the cytoplasm. The catalysed reaction is L-aspartate + H(+) = beta-alanine + CO2. Its pathway is cofactor biosynthesis; (R)-pantothenate biosynthesis; beta-alanine from L-aspartate: step 1/1. Catalyzes the pyruvoyl-dependent decarboxylation of aspartate to produce beta-alanine. This Campylobacter jejuni subsp. doylei (strain ATCC BAA-1458 / RM4099 / 269.97) protein is Aspartate 1-decarboxylase.